We begin with the raw amino-acid sequence, 365 residues long: GTPase Obg (365 aa).

Residues 1 to 159 (MKFIDEARIE…RMLKLELKVL (159 aa)) enclose the Obg domain. Positions 160–334 (ADVGLLGMPN…LIYAIKDHLQ (175 aa)) constitute an OBG-type G domain. GTP is bound by residues 166 to 173 (GMPNAGKS), 191 to 195 (FTTLH), 213 to 216 (DIPG), 284 to 287 (NKLD), and 315 to 317 (SAL). Serine 173 and threonine 193 together coordinate Mg(2+).

The protein belongs to the TRAFAC class OBG-HflX-like GTPase superfamily. OBG GTPase family. As to quaternary structure, monomer. It depends on Mg(2+) as a cofactor.

The protein resides in the cytoplasm. Its function is as follows. An essential GTPase which binds GTP, GDP and possibly (p)ppGpp with moderate affinity, with high nucleotide exchange rates and a fairly low GTP hydrolysis rate. Plays a role in control of the cell cycle, stress response, ribosome biogenesis and in those bacteria that undergo differentiation, in morphogenesis control. The protein is GTPase Obg of Cupriavidus taiwanensis (strain DSM 17343 / BCRC 17206 / CCUG 44338 / CIP 107171 / LMG 19424 / R1) (Ralstonia taiwanensis (strain LMG 19424)).